Here is a 158-residue protein sequence, read N- to C-terminus: Transcription elongation factor GreA (158 aa).

Belongs to the GreA/GreB family.

Necessary for efficient RNA polymerase transcription elongation past template-encoded arresting sites. The arresting sites in DNA have the property of trapping a certain fraction of elongating RNA polymerases that pass through, resulting in locked ternary complexes. Cleavage of the nascent transcript by cleavage factors such as GreA or GreB allows the resumption of elongation from the new 3'terminus. GreA releases sequences of 2 to 3 nucleotides. This is Transcription elongation factor GreA from Pseudomonas syringae pv. tomato (strain ATCC BAA-871 / DC3000).